The primary structure comprises 599 residues: Aspartate--tRNA ligase (599 aa).

Residue Glu-175 participates in L-aspartate binding. The interval 199–202 is aspartate; it reads QQFK. The L-aspartate site is built by Arg-221 and His-446. 221-223 is an ATP binding site; sequence RDE. Residue Glu-480 coordinates ATP. An L-aspartate-binding site is contributed by Arg-487. An ATP-binding site is contributed by 532 to 535; sequence GVDR.

The protein belongs to the class-II aminoacyl-tRNA synthetase family. Type 1 subfamily. In terms of assembly, homodimer.

It is found in the cytoplasm. The catalysed reaction is tRNA(Asp) + L-aspartate + ATP = L-aspartyl-tRNA(Asp) + AMP + diphosphate. In terms of biological role, catalyzes the attachment of L-aspartate to tRNA(Asp) in a two-step reaction: L-aspartate is first activated by ATP to form Asp-AMP and then transferred to the acceptor end of tRNA(Asp). In Streptomyces griseus subsp. griseus (strain JCM 4626 / CBS 651.72 / NBRC 13350 / KCC S-0626 / ISP 5235), this protein is Aspartate--tRNA ligase.